The primary structure comprises 383 residues: Probable purine permease 16 (383 aa).

10 helical membrane passes run 30–50 (ISVFICGFLIFAGDSLVMLLL), 72–92 (WTQALIQNAAFPILIPFFFIL), 113–133 (VLSLYVSLGVLVSVYSKLYAL), 138–158 (VGWGILLSTQLILTSLFSAFI), 166–186 (WIIISIIFTLGADFFGGPAFA), 203–223 (LILIFPTLAFSLSLCLMQLGF), 247–267 (ICVSFIATLICTVGLFASGEF), 297–317 (VWAVGLLGLVLLVSGLFADVV), 322–342 (SPVVALLVVLAFDFMDDEFGW), and 346–363 (GALLGAVLALASYFYSLH).

The protein belongs to the purine permeases (TC 2.A.7.14) family.

Its subcellular location is the membrane. The chain is Probable purine permease 16 (PUP16) from Arabidopsis thaliana (Mouse-ear cress).